The chain runs to 83 residues: Small ribosomal subunit protein bS18A (83 aa).

The protein belongs to the bacterial ribosomal protein bS18 family. Part of the 30S ribosomal subunit. Forms a tight heterodimer with protein bS6.

Functionally, binds as a heterodimer with protein bS6 to the central domain of the 16S rRNA, where it helps stabilize the platform of the 30S subunit. The sequence is that of Small ribosomal subunit protein bS18A from Nocardia farcinica (strain IFM 10152).